The chain runs to 77 residues: Small ribosomal subunit protein uS17 (77 aa).

It belongs to the universal ribosomal protein uS17 family. In terms of assembly, part of the 30S ribosomal subunit.

One of the primary rRNA binding proteins, it binds specifically to the 5'-end of 16S ribosomal RNA. The chain is Small ribosomal subunit protein uS17 from Rickettsia conorii (strain ATCC VR-613 / Malish 7).